We begin with the raw amino-acid sequence, 419 residues long: Delta(8)-fatty-acid desaturase (419 aa).

In terms of domain architecture, Cytochrome b5 heme-binding spans 1-64; that stretch reads MKSKRQALSP…LKRMPKINPS (64 aa). 2 residues coordinate heme: His24 and His47. A helical transmembrane segment spans residues 110-130; the sequence is LGVLGYFLMVQYQMYFIGAVL. The Histidine box-1 signature appears at 143–147; the sequence is HDICH. A helical membrane pass occupies residues 156 to 176; sequence WNNLVGLVFGNGLQGFSVTCW. A Histidine box-2 motif is present at residues 180 to 184; it reads HNAHH. Transmembrane regions (helical) follow at residues 226 to 246, 266 to 286, and 290 to 310; these read YFLV…VLTV, IGLA…MPSI, and LLVF…VVFM. The short motif at 355 to 359 is the Histidine box-3 element; the sequence is QIEHH.

The protein belongs to the fatty acid desaturase type 1 family. It depends on Fe cation as a cofactor.

It localises to the membrane. The enzyme catalyses an (11Z,14Z)-icosadienoyl-containing glycerolipid + 2 Fe(II)-[cytochrome b5] + O2 + 2 H(+) = an (8Z,11Z,14Z)-icosatrienoyl-containing glycerolipid + 2 Fe(III)-[cytochrome b5] + 2 H2O. It catalyses the reaction an (11Z,14Z,17Z)-icosatrienoyl-containing glycerolipid + 2 Fe(II)-[cytochrome b5] + O2 + 2 H(+) = an (8Z,11Z,14Z,17Z)-eicosatetraenoyl-containing glycerolipid + 2 Fe(III)-[cytochrome b5] + 2 H2O. The catalysed reaction is an (11Z)-eicosenoyl-containing glycerolipid + 2 Fe(II)-[cytochrome b5] + O2 + 2 H(+) = a (8Z,11Z)-eicosadienoyl-containing glycerolipid + 2 Fe(III)-[cytochrome b5] + 2 H2O. The protein operates within lipid metabolism; fatty acid metabolism. Delta(8)-fatty-acid desaturase which introduces a double bond at the 8-position in 20-carbon chain length fatty acids (C20) that have an existing delta-11 unsaturation (double bond). Whether it acts on CoA-linked substrates (as in animals) or phospholipid-linked substrates (as in plants and fungi) is still not clear. In Euglena gracilis, this protein is Delta(8)-fatty-acid desaturase (efd1).